A 452-amino-acid polypeptide reads, in one-letter code: Alkane uptake protein A (452 aa).

An N-terminal signal peptide occupies residues methionine 1–alanine 36.

Belongs to the OmpP1/FadL family. Interacts with the inner membrane protein AupB.

It localises to the cell outer membrane. In terms of biological role, required for growth on alkanes. Probably involved in the uptake of micelle-solubilized alkanes. The protein is Alkane uptake protein A of Marinobacter nauticus (strain ATCC 49840 / DSM 8798 / CIP 103578 / SP17) (Marinobacter hydrocarbonoclasticus).